Reading from the N-terminus, the 100-residue chain is NADH-ubiquinone oxidoreductase chain 4L (100 aa).

Helical transmembrane passes span 3-23 (LSKY…GIFL), 28-48 (IIVM…NFLL), and 61-81 (FALL…ALLV).

This sequence belongs to the complex I subunit 4L family. Complex I is composed of about 45 different subunits.

The protein localises to the mitochondrion membrane. The enzyme catalyses a ubiquinone + NADH + 5 H(+)(in) = a ubiquinol + NAD(+) + 4 H(+)(out). Core subunit of the mitochondrial membrane respiratory chain NADH dehydrogenase (Complex I) that is believed to belong to the minimal assembly required for catalysis. Complex I functions in the transfer of electrons from NADH to the respiratory chain. The immediate electron acceptor for the enzyme is believed to be ubiquinone. In Prototheca wickerhamii, this protein is NADH-ubiquinone oxidoreductase chain 4L (ND4L).